The sequence spans 133 residues: Phosphoribosyl-AMP cyclohydrolase (133 aa).

Residue D77 participates in Mg(2+) binding. C78 contributes to the Zn(2+) binding site. Residues D79 and D81 each coordinate Mg(2+). Residues C95 and C102 each coordinate Zn(2+).

This sequence belongs to the PRA-CH family. Homodimer. Mg(2+) serves as cofactor. Requires Zn(2+) as cofactor.

The protein localises to the cytoplasm. It carries out the reaction 1-(5-phospho-beta-D-ribosyl)-5'-AMP + H2O = 1-(5-phospho-beta-D-ribosyl)-5-[(5-phospho-beta-D-ribosylamino)methylideneamino]imidazole-4-carboxamide. It participates in amino-acid biosynthesis; L-histidine biosynthesis; L-histidine from 5-phospho-alpha-D-ribose 1-diphosphate: step 3/9. Functionally, catalyzes the hydrolysis of the adenine ring of phosphoribosyl-AMP. In Pseudomonas fluorescens (strain Pf0-1), this protein is Phosphoribosyl-AMP cyclohydrolase.